A 357-amino-acid polypeptide reads, in one-letter code: 3-dehydroquinate synthase (357 aa).

NAD(+)-binding positions include 104–108 (GVVGD), 128–129 (TT), Lys141, and 168–171 (FLET). Zn(2+)-binding residues include Glu183, His243, and His260.

This sequence belongs to the sugar phosphate cyclases superfamily. Dehydroquinate synthase family. NAD(+) serves as cofactor. It depends on Co(2+) as a cofactor. Zn(2+) is required as a cofactor.

It is found in the cytoplasm. The enzyme catalyses 7-phospho-2-dehydro-3-deoxy-D-arabino-heptonate = 3-dehydroquinate + phosphate. It functions in the pathway metabolic intermediate biosynthesis; chorismate biosynthesis; chorismate from D-erythrose 4-phosphate and phosphoenolpyruvate: step 2/7. Catalyzes the conversion of 3-deoxy-D-arabino-heptulosonate 7-phosphate (DAHP) to dehydroquinate (DHQ). This chain is 3-dehydroquinate synthase, found in Streptococcus pyogenes serotype M6 (strain ATCC BAA-946 / MGAS10394).